Consider the following 131-residue polypeptide: C-glycoside deglycosidase beta subunit (131 aa).

This sequence belongs to the C-glycoside deglycosidase beta subunit family. Heterodimer composed of an alpha subunit (CarB) and a beta subunit (CarC). A divalent metal cation serves as cofactor.

The catalysed reaction is 3''-dehydroisovitexin = 1,5-anhydro-D-erythro-hex-1-en-3-ulose + apigenin. The enzyme catalyses 3''-dehydroisoorientin = 1,5-anhydro-D-erythro-hex-1-en-3-ulose + luteolin. In terms of biological role, carbon-carbon bond-cleaving enzyme which participates in the metabolism of C-glycosides. Acts on the C6-glycosylated compounds 3''-dehydroisovitexin (3''-oxo-isovitexin) and 3''-dehydroisoorientin (3''-oxo-homoorientin). Shows weak activity with 3'-dehydromangiferin (3'-oxo-mangiferin). The sequence is that of C-glycoside deglycosidase beta subunit from Microbacterium trichothecenolyticum (Aureobacterium trichothecenolyticum).